The sequence spans 488 residues: Glutamate synthase [NADPH] small chain (488 aa).

Residues 38 to 69 (ESLRQQATRCMDCGIPFCHNGCPLGNLIPEWN) form the 4Fe-4S ferredoxin-type domain.

Requires [4Fe-4S] cluster as cofactor.

It catalyses the reaction 2 L-glutamate + NADP(+) = L-glutamine + 2-oxoglutarate + NADPH + H(+). It participates in amino-acid biosynthesis; L-glutamate biosynthesis via GLT pathway; L-glutamate from 2-oxoglutarate and L-glutamine (NADP(+) route): step 1/1. The chain is Glutamate synthase [NADPH] small chain (gltD) from Mycobacterium tuberculosis (strain CDC 1551 / Oshkosh).